Here is a 202-residue protein sequence, read N- to C-terminus: Recombination protein RecR (202 aa).

A C4-type zinc finger spans residues 57–72 (CGVCRTFTEQPCCDIC). The Toprim domain maps to 81–176 (GQICVVESPS…STTKIAHGVP (96 aa)).

The protein belongs to the RecR family.

In terms of biological role, may play a role in DNA repair. It seems to be involved in an RecBC-independent recombinational process of DNA repair. It may act with RecF and RecO. This Hamiltonella defensa subsp. Acyrthosiphon pisum (strain 5AT) protein is Recombination protein RecR.